Here is a 96-residue protein sequence, read N- to C-terminus: Protein Vpr (96 aa).

The interval 1–42 is homooligomerization; it reads MEQAPEDQGPQREPYNEWTLELLEELKSEAVRHFPRIWLHNL. A phosphoserine; by host mark is found at S79, S94, and S96.

This sequence belongs to the HIV-1 VPR protein family. In terms of assembly, homooligomer, may form homodimer. Interacts with p6-gag region of the Pr55 Gag precursor protein through a (Leu-X-X)4 motif near the C-terminus of the P6gag protein. Interacts with host UNG. May interact with host RAD23A/HHR23A. Interacts with host VPRBP/DCAF1, leading to hijack the CUL4A-RBX1-DDB1-DCAF1/VPRBP complex, mediating ubiquitination of host proteins such as TERT and ZGPAT and arrest of the cell cycle in G2 phase. Post-translationally, phosphorylated on several residues by host. These phosphorylations regulate VPR activity for the nuclear import of the HIV-1 pre-integration complex.

The protein localises to the virion. Its subcellular location is the host nucleus. The protein resides in the host extracellular space. Functionally, during virus replication, may deplete host UNG protein, and incude G2-M cell cycle arrest. Acts by targeting specific host proteins for degradation by the 26S proteasome, through association with the cellular CUL4A-DDB1 E3 ligase complex by direct interaction with host VPRPB/DCAF-1. Cell cycle arrest reportedly occurs within hours of infection and is not blocked by antiviral agents, suggesting that it is initiated by the VPR carried into the virion. Additionally, VPR induces apoptosis in a cell cycle dependent manner suggesting that these two effects are mechanistically linked. Detected in the serum and cerebrospinal fluid of AIDS patient, VPR may also induce cell death to bystander cells. During virus entry, plays a role in the transport of the viral pre-integration (PIC) complex to the host nucleus. This function is crucial for viral infection of non-dividing macrophages. May act directly at the nuclear pore complex, by binding nucleoporins phenylalanine-glycine (FG)-repeat regions. This chain is Protein Vpr, found in Homo sapiens (Human).